The following is a 90-amino-acid chain: Small ribosomal subunit protein bS16 (90 aa).

This sequence belongs to the bacterial ribosomal protein bS16 family.

The sequence is that of Small ribosomal subunit protein bS16 from Geobacillus sp. (strain WCH70).